Reading from the N-terminus, the 122-residue chain is Large ribosomal subunit protein uL14 (122 aa).

Belongs to the universal ribosomal protein uL14 family. As to quaternary structure, part of the 50S ribosomal subunit. Forms a cluster with proteins L3 and L19. In the 70S ribosome, L14 and L19 interact and together make contacts with the 16S rRNA in bridges B5 and B8.

Its function is as follows. Binds to 23S rRNA. Forms part of two intersubunit bridges in the 70S ribosome. This chain is Large ribosomal subunit protein uL14, found in Gemmatimonas aurantiaca (strain DSM 14586 / JCM 11422 / NBRC 100505 / T-27).